Reading from the N-terminus, the 288-residue chain is uncharacterized protein (288 aa).

Positions 107-288 (KQIPTLIGPQ…LAIQLLASIA (182 aa)) constitute an ATP-grasp domain. ATP is bound by residues K145 and 178–188 (QQYIATSNSEA). D248, E261, and N263 together coordinate Mg(2+). Mn(2+)-binding residues include D248, E261, and N263.

The protein belongs to the RimK family.

This is an uncharacterized protein from Mycoplasma pneumoniae (strain ATCC 29342 / M129 / Subtype 1) (Mycoplasmoides pneumoniae).